The following is a 938-amino-acid chain: Isoleucine--tRNA ligase (938 aa).

Residues 58–68 (PYANGSIHIGH) carry the 'HIGH' region motif. Lysine 183 is subject to N6-acetyllysine. Glutamate 561 contacts L-isoleucyl-5'-AMP. A 'KMSKS' region motif is present at residues 602–606 (KMSKS). Lysine 605 contacts ATP. 4 residues coordinate Zn(2+): cysteine 901, cysteine 904, cysteine 921, and cysteine 924.

This sequence belongs to the class-I aminoacyl-tRNA synthetase family. IleS type 1 subfamily. As to quaternary structure, monomer. Requires Zn(2+) as cofactor.

The protein resides in the cytoplasm. The catalysed reaction is tRNA(Ile) + L-isoleucine + ATP = L-isoleucyl-tRNA(Ile) + AMP + diphosphate. Catalyzes the attachment of isoleucine to tRNA(Ile). As IleRS can inadvertently accommodate and process structurally similar amino acids such as valine, to avoid such errors it has two additional distinct tRNA(Ile)-dependent editing activities. One activity is designated as 'pretransfer' editing and involves the hydrolysis of activated Val-AMP. The other activity is designated 'posttransfer' editing and involves deacylation of mischarged Val-tRNA(Ile). The polypeptide is Isoleucine--tRNA ligase (Escherichia coli O7:K1 (strain IAI39 / ExPEC)).